We begin with the raw amino-acid sequence, 154 residues long: Transcriptional repressor NrdR (154 aa).

A zinc finger lies at 3–34 (CPFCRHPDSRVIDSRETDEGQAIRRRRSCPEC). One can recognise an ATP-cone domain in the interval 46 to 136 (LAVVKRSGVT…VYRSFSSADD (91 aa)).

This sequence belongs to the NrdR family. The cofactor is Zn(2+).

In terms of biological role, negatively regulates transcription of bacterial ribonucleotide reductase nrd genes and operons by binding to NrdR-boxes. The sequence is that of Transcriptional repressor NrdR from Mycobacterium bovis (strain ATCC BAA-935 / AF2122/97).